A 749-amino-acid chain; its full sequence is RNA-binding protein 5-B (749 aa).

Residues 1-88 (MGSDKRVSRS…YHSDGDYMDH (88 aa)) form a disordered region. One can recognise an RRM 1 domain in the interval 102 to 182 (KTIMLRGLPI…KTIAMHYSNP (81 aa)). The RanBP2-type zinc-finger motif lies at 185–214 (KFEDWLCNKCGLYNFRRRLKCFRCGAAKAE). The RRM 2 domain occupies 241–325 (SAIILRNIGP…KTIGVDFAKS (85 aa)). Disordered regions lie at residues 425 to 471 (QMYQ…SVPD), 520 to 558 (PAAD…AQQI), 570 to 595 (NKQK…ESAA), and 626 to 680 (TEEE…NSNI). The segment covering 429-460 (QPGSPTQSGTSTAASTTPASTTSTEEATTPTA) has biased composition (low complexity). Basic and acidic residues-rich tracts occupy residues 585–594 (SRDEERKESA) and 627–648 (EEEK…EKYG). A G-patch domain is found at 677 to 723 (NSNIGNKMLQAMGWKEGSGLGRKSQGITAPIQAQVRMRGAGLGAKGS).

Belongs to the RBM5/RBM10 family. Component of the spliceosome A complex (also known as the prespliceosome). Appears to dissociate from the spliceosome upon formation of the spliceosome B complex (also known as the precatalytic spliceosome), in which the heterotrimeric U4/U6.U5 snRNPs are bound.

It localises to the nucleus. In terms of biological role, component of the spliceosome A complex. Regulates alternative splicing of a number of mRNAs. May modulate splice site pairing after recruitment of the U1 and U2 snRNPs to the 5' and 3' splice sites of the intron. This Xenopus laevis (African clawed frog) protein is RNA-binding protein 5-B (rbm5-b).